We begin with the raw amino-acid sequence, 33 residues long: uncharacterized protein (33 aa).

The disordered stretch occupies residues 1-24 (MRTGTRCDLGELSHPRKTLPPRGM).

This is an uncharacterized protein from Treponema pallidum (strain Nichols).